Here is a 566-residue protein sequence, read N- to C-terminus: Alpha-keto-acid decarboxylase (566 aa).

Residue glutamate 61 coordinates thiamine diphosphate. The thiamine pyrophosphate binding stretch occupies residues 396-478 (TSFYGMADHR…VVVNNDGYTV (83 aa)). Residues aspartate 446, asparagine 473, and glycine 475 each contribute to the Mg(2+) site.

This sequence belongs to the TPP enzyme family. The cofactor is a metal cation. Thiamine diphosphate serves as cofactor.

Functionally, decarboxylates branched-chain and aromatic alpha-keto acids to aldehydes. The chain is Alpha-keto-acid decarboxylase (kdc) from Mycobacterium ulcerans (strain Agy99).